The sequence spans 167 residues: Leptin (167 aa).

The N-terminal stretch at 1–21 (MCWRPLCRFLWLWSYLSYVQA) is a signal peptide. An intrachain disulfide couples Cys117 to Cys167.

The protein belongs to the leptin family.

It localises to the secreted. Key player in the regulation of energy balance and body weight control. Once released into the circulation, has central and peripheral effects by binding LEPR, found in many tissues, which results in the activation of several major signaling pathways. In the hypothalamus, acts as an appetite-regulating factor that induces a decrease in food intake and an increase in energy consumption by inducing anorexinogenic factors and suppressing orexigenic neuropeptides, also regulates bone mass and secretion of hypothalamo-pituitary-adrenal hormones. In the periphery, increases basal metabolism, influences reproductive function, regulates pancreatic beta-cell function and insulin secretion, is pro-angiogenic for endothelial cell and affects innate and adaptive immunity. In the arcuate nucleus of the hypothalamus, activates by depolarization POMC neurons inducing FOS and SOCS3 expression to release anorexigenic peptides and inhibits by hyperpolarization NPY neurons inducing SOCS3 with a consequent reduction on release of orexigenic peptides. In addition to its known satiety inducing effect, has a modulatory role in nutrient absorption. In the intestine, reduces glucose absorption by enterocytes by activating PKC and leading to a sequential activation of p38, PI3K and ERK signaling pathways which exerts an inhibitory effect on glucose absorption. Acts as a growth factor on certain tissues, through the activation of different signaling pathways increases expression of genes involved in cell cycle regulation such as CCND1, via JAK2-STAT3 pathway, or VEGFA, via MAPK1/3 and PI3K-AKT1 pathways. May also play an apoptotic role via JAK2-STAT3 pathway and up-regulation of BIRC5 expression. Pro-angiogenic, has mitogenic activity on vascular endothelial cells and plays a role in matrix remodeling by regulating the expression of matrix metalloproteinases (MMPs) and tissue inhibitors of metalloproteinases (TIMPs). In innate immunity, modulates the activity and function of neutrophils by increasing chemotaxis and the secretion of oxygen radicals. Increases phagocytosis by macrophages and enhances secretion of pro-inflammatory mediators. Increases cytotoxic ability of NK cells. Plays a pro-inflammatory role, in synergy with IL1B, by inducing NOS2 which promotes the production of IL6, IL8 and Prostaglandin E2, through a signaling pathway that involves JAK2, PI3K, MAP2K1/MEK1 and MAPK14/p38. In adaptive immunity, promotes the switch of memory T-cells towards T helper-1 cell immune responses. Increases CD4(+)CD25(-) T cells proliferation and reduces autophagy during TCR (T cell receptor) stimulation, through MTOR signaling pathway activation and BCL2 up-regulation. The sequence is that of Leptin (Lep) from Mus musculus (Mouse).